The chain runs to 476 residues: Zinc metalloproteinase/disintegrin (476 aa).

Positions 1–20 (MIQVLLVIICLADFPYQGTS) are cleaved as a signal peptide. Positions 21–184 (IILESGNVND…KSDEPIKASQ (164 aa)) are excised as a propeptide. The residue at position 185 (glutamine 185) is a Pyrrolidone carboxylic acid. The Peptidase M12B domain maps to 191-387 (RYIELVVVAD…RNPQCILNEP (197 aa)). Ca(2+)-binding residues include glutamate 194 and aspartate 278. 3 cysteine pairs are disulfide-bonded: cysteine 302–cysteine 382, cysteine 342–cysteine 366, and cysteine 344–cysteine 349. Residue histidine 327 participates in Zn(2+) binding. Glutamate 328 is an active-site residue. Zn(2+) contacts are provided by histidine 331 and histidine 337. 2 residues coordinate Ca(2+): cysteine 382 and asparagine 385. Positions 388–403 (LRTDTVSTPVSGNELL) are excised as a propeptide. Positions 395–476 (TPVSGNELLE…AGCPRNGFYG (82 aa)) constitute a Disintegrin domain. 6 disulfide bridges follow: cysteine 409/cysteine 424, cysteine 411/cysteine 419, cysteine 418/cysteine 441, cysteine 432/cysteine 438, cysteine 437/cysteine 462, and cysteine 450/cysteine 469. The Cell attachment site motif lies at 454-456 (KGD).

This sequence belongs to the venom metalloproteinase (M12B) family. P-II subfamily. P-IId sub-subfamily. Homodimer; disulfide-linked (disintegrin). Zn(2+) is required as a cofactor. Expressed by the venom gland.

The protein resides in the secreted. Its activity is regulated as follows. The metalloproteinase is inhibited by EDTA, o-phenanthroline, and cysteine. Glutathione does not inhibit the enzymatic activity. Its function is as follows. Shows weak degradation of alpha-fibrinogen, but has no activity on beta- and gamma-chains. Digests luteinizing hormone-releasing hormone (LH-RH) and oxidized insulin at X-Leu, X-Phe, and X-Val bonds as well as X-His bond. Does not show fibrinogen-clotting activity. Does not show hemorrhagic activity. In terms of biological role, inhibits ADP-induced platelet aggregation. The sequence is that of Zinc metalloproteinase/disintegrin from Gloydius brevicauda (Korean slamosa snake).